We begin with the raw amino-acid sequence, 217 residues long: Coiled-coil domain-containing protein 124 (217 aa).

The interval 1 to 120 (MPKKFQGENS…PVEKAKSHLE (120 aa)) is disordered. Positions 15 to 82 (ARARRAEAKA…LLEEEDSRLK (68 aa)) form a coiled coil. Basic and acidic residues-rich tracts occupy residues 18-74 (RRAE…QRLL) and 98-120 (QIED…SHLE). A phosphoserine mark is found at S136 and S188.

It belongs to the CCDC124 family. In terms of assembly, associates with translationally inactive ribosomes in the nonrotated state. Interacts with RASGEF1B.

It localises to the cytoplasm. It is found in the cytoskeleton. Its subcellular location is the microtubule organizing center. The protein resides in the centrosome. The protein localises to the midbody. Functionally, ribosome-binding protein involved in ribosome hibernation: associates with translationally inactive ribosomes and stabilizes the nonrotated conformation of the 80S ribosome, thereby promoting ribosome preservation and storage. Also required for proper progression of late cytokinetic stages. The chain is Coiled-coil domain-containing protein 124 (Ccdc124) from Mus musculus (Mouse).